Here is a 344-residue protein sequence, read N- to C-terminus: Methionine import ATP-binding protein MetN 1 (344 aa).

The region spanning I2–I241 is the ABC transporter domain. G38–S45 provides a ligand contact to ATP.

This sequence belongs to the ABC transporter superfamily. Methionine importer (TC 3.A.1.24) family. The complex is composed of two ATP-binding proteins (MetN), two transmembrane proteins (MetI) and a solute-binding protein (MetQ).

The protein resides in the cell inner membrane. The catalysed reaction is L-methionine(out) + ATP + H2O = L-methionine(in) + ADP + phosphate + H(+). It carries out the reaction D-methionine(out) + ATP + H2O = D-methionine(in) + ADP + phosphate + H(+). In terms of biological role, part of the ABC transporter complex MetNIQ involved in methionine import. Responsible for energy coupling to the transport system. This Burkholderia lata (strain ATCC 17760 / DSM 23089 / LMG 22485 / NCIMB 9086 / R18194 / 383) protein is Methionine import ATP-binding protein MetN 1.